The sequence spans 2222 residues: MALYNPIPVRQNCFTVNRSLFIFGEDNIVRKYAKKLIDWPPFEYMILATIIANCIVLALEQHLPEDDKTPMSRRLEKTEPYFIGIFCFEAGIKIVALGFIFHKGSYLRNGWNVMDFIVVLSGILATAGTHFNTHVDLRTLRAVRVLRPLKLVSGIPSLQIVLKSIMKAMVPLLQIGLLLFFAILMFAIIGLEFYSGKLHRACFMNNSGILEGFDPPHPCGVQGCPAGYECKDWIGPNDGITQFDNILFAVLTVFQCITMEGWTTVLYNTNDALGATWNWLYFIPLIIIGSFFVLNLVLGVLSGEFAKERERVENRRAFMKLRRQQQIERELNGYRAWIDKAEEVMLAEENKNSGTSALEVLRRATIKRSRTEAMTRDSSDEHCVDISSVGTPLARASIKSTKVDGASYFRHKERLLRISIRHMVKSQVFYWIVLSVVALNTACVAIVHHNQPQWLTHLLYYAEFLFLGLFLLEMSLKMYGMGPRLYFHSSFNCFDFGVTVGSIFEVVWAIFRPGTSFGISVLRALRLLRIFKITKYWASLRNLVVSLMSSMKSIISLLFLLFLFIVVFALLGMQLFGGRFNFNDGTPSANFDTFPAAIMTVFQILTGEDWNEVMYNGIRSQGGVSSGMWSAIYFIVLTLFGNYTLLNVFLAIAVDNLANAQELTKDEQEEEEAFNQKHALQKAKEVSPMSAPNMPSIERDRRRRHHMSMWEPRSSHLRERRRRHHMSVWEQRTSQLRRHMQMSSQEALNKEEAPPMNPLNPLNPLSPLNPLNAHPSLYRRPRPIEGLALGLGLEKCEEERISRGGSLKGDIGGLTSVLDNQRSPLSLGKREPPWLPRSCHGNCDPTQQETGGGETVVTFEDRARHRQSQRRSRHRRVRTEGKESASASRSRSASQERSLDEGVSIDGEKEHEPQSSHRSKEPTIHEEERTQDLRRTNSLMVPRGSGLVGALDEAETPLVQPQPELEVGKDAALTEQEAEGSSEQALLADVQLDVGRGISQSEPDLSCMTTNMDKATTESTSVTVAIPDVDPLVDSTVVNISNKTDGEASPLKEAETKEEEEEVEKKKQKKEKRETGKAMVPHSSMFIFSTTNPIRKACHYIVNLRYFEMCILLVIAASSIALAAEDPVLTNSERNKVLRYFDYVFTGVFTFEMVIKMIDQGLILQDGSYFRDLWNILDFVVVVGALVAFALANALGTNKGRDIKTIKSLRVLRVLRPLKTIKRLPKLKAVFDCVVTSLKNVFNILIVYKLFMFIFAVIAVQLFKGKFFYCTDSSKDTEKECIGNYVDHEKNKMEVKGREWKRHEFHYDNIIWALLTLFTVSTGEGWPQVLQHSVDVTEEDRGPSRSNRMEMSIFYVVYFVVFPFFFVNIFVALIIITFQEQGDKMMEECSLEKNERACIDFAISAKPLTRYMPQNRHTFQYRVWHFVVSPSFEYTIMAMIALNTVVLMMKYYSAPWTYELALKYLNIAFTMVFSLECVLKVIAFGFLNYFRDTWNIFDFITVIGSITEIILTDSKLVNTSGFNMSFLKLFRAARLIKLLRQGYTIRILLWTFVQSFKALPYVCLLIAMLFFIYAIIGMQVFGNIKLDEESHINRHNNFRSFFGSLMLLFRSATGEAWQEIMLSCLGEKGCEPDTTAPSGQNESERCGTDLAYVYFVSFIFFCSFLMLNLFVAVIMDNFEYLTRDSSILGPHHLDEFVRVWAEYDRAACGRIHYTEMYEMLTLMSPPLGLGKRCPSKVAYKRLVLMNMPVAEDMTVHFTSTLMALIRTALDIKIAKGGADRQQLDSELQKETLAIWPHLSQKMLDLLVPMPKASDLTVGKIYAAMMIMDYYKQSKVKKQRQQLEEQKNAPMFQRMEPSSLPQEIISNAKALPYLQQDPVSGLSGRSGYPSMSPLSPQEIFQLACMDPADDGQFQEQQSLVVTDPSSMRRSFSTIRDKRSNSSWLEEFSMERSSENTYKSRRRSYHSSLRLSAHRLNSDSGHKSDTHRSGGRERGRSKERKHLLSPDVSRCNSEERGTQADWESPERRQSRSPSEGRSQTPNRQGTGSLSESSIPSISDTSTPRRSRRQLPPVPPKPRPLLSYSSLMRHTGGISPPPDGSEGGSPLASQALESNSACLTESSNSLHPQQGQHPSPQHYISEPYLALHEDSHASDCGEEETLTFEAAVATSLGRSNTIGSAPPLRHSWQMPNGHYRRRRLGGLGLAMMCGAVSDLLSDTEEDDKC.

Residues 1-40 are Cytoplasmic-facing; it reads MALYNPIPVRQNCFTVNRSLFIFGEDNIVRKYAKKLIDWP. One copy of the I repeat lies at 27-305; sequence NIVRKYAKKL…LVLGVLSGEF (279 aa). Residues 41–59 form a helical membrane-spanning segment; that stretch reads PFEYMILATIIANCIVLAL. Over 60 to 78 the chain is Extracellular; that stretch reads EQHLPEDDKTPMSRRLEKT. The chain crosses the membrane as a helical span at residues 79–97; sequence EPYFIGIFCFEAGIKIVAL. Residues 98–109 are Cytoplasmic-facing; the sequence is GFIFHKGSYLRN. Residues 110–124 traverse the membrane as a helical segment; sequence GWNVMDFIVVLSGIL. Residues 125–136 are Extracellular-facing; that stretch reads ATAGTHFNTHVD. The helical transmembrane segment at 137-156 threads the bilayer; sequence LRTLRAVRVLRPLKLVSGIP. At 157–174 the chain is on the cytoplasmic side; it reads SLQIVLKSIMKAMVPLLQ. The chain crosses the membrane as a helical span at residues 175–195; sequence IGLLLFFAILMFAIIGLEFYS. Over 196-277 the chain is Extracellular; the sequence is GKLHRACFMN…NTNDALGATW (82 aa). N-linked (GlcNAc...) asparagine glycosylation occurs at asparagine 205. Residues 278–301 form a helical membrane-spanning segment; the sequence is NWLYFIPLIIIGSFFVLNLVLGVL. The Cytoplasmic portion of the chain corresponds to 302-427; the sequence is SGEFAKERER…ISIRHMVKSQ (126 aa). Positions 325-342 are binding to the beta subunit; that stretch reads QQIERELNGYRAWIDKAE. Ca(2+) is bound at residue aspartate 377. Serine 378 bears the Phosphoserine mark. Residues serine 379, glutamate 381, and cysteine 383 each coordinate Ca(2+). Threonine 391 bears the Phosphothreonine mark. One copy of the II repeat lies at 413–657; the sequence is ERLLRISIRH…VFLAIAVDNL (245 aa). The chain crosses the membrane as a helical span at residues 428–447; the sequence is VFYWIVLSVVALNTACVAIV. Residues 448 to 460 lie on the Extracellular side of the membrane; that stretch reads HHNQPQWLTHLLY. A helical transmembrane segment spans residues 461 to 480; that stretch reads YAEFLFLGLFLLEMSLKMYG. Residues 481–489 are Cytoplasmic-facing; that stretch reads MGPRLYFHS. The chain crosses the membrane as a helical span at residues 490–508; the sequence is SFNCFDFGVTVGSIFEVVW. Over 509–518 the chain is Extracellular; the sequence is AIFRPGTSFG. Residues 519-537 traverse the membrane as a helical segment; sequence ISVLRALRLLRIFKITKYW. Over 538-556 the chain is Cytoplasmic; it reads ASLRNLVVSLMSSMKSIIS. Residues 557 to 576 form a helical membrane-spanning segment; the sequence is LLFLLFLFIVVFALLGMQLF. The Extracellular portion of the chain corresponds to 577–629; sequence GGRFNFNDGTPSANFDTFPAAIMTVFQILTGEDWNEVMYNGIRSQGGVSSGMW. A helical transmembrane segment spans residues 630-654; the sequence is SAIYFIVLTLFGNYTLLNVFLAIAV. Over 655 to 1100 the chain is Cytoplasmic; it reads DNLANAQELT…TNPIRKACHY (446 aa). The tract at residues 680–727 is disordered; it reads LQKAKEVSPMSAPNMPSIERDRRRRHHMSMWEPRSSHLRERRRRHHMS. Residues serine 687, serine 696, serine 744, serine 766, and serine 806 each carry the phosphoserine modification. Disordered stretches follow at residues 820 to 944 and 1042 to 1076; these read NQRS…VPRG and NKTD…RETG. Residues 864–877 are compositionally biased toward basic residues; that stretch reads RHRQSQRRSRHRRV. A compositionally biased stretch (low complexity) spans 884–896; that stretch reads SASASRSRSASQE. The residue at position 898 (serine 898) is a Phosphoserine. 2 stretches are compositionally biased toward basic and acidic residues: residues 906–935 and 1044–1055; these read DGEK…DLRR and TDGEASPLKEAE. Phosphoserine is present on serine 1049. One copy of the III repeat lies at 1092–1378; it reads NPIRKACHYI…IFVALIIITF (287 aa). Residues 1101–1117 form a helical membrane-spanning segment; sequence IVNLRYFEMCILLVIAA. Over 1118 to 1141 the chain is Extracellular; it reads SSIALAAEDPVLTNSERNKVLRYF. The helical transmembrane segment at 1142-1161 threads the bilayer; sequence DYVFTGVFTFEMVIKMIDQG. Over 1162 to 1169 the chain is Cytoplasmic; sequence LILQDGSY. Residues 1170-1192 form a helical membrane-spanning segment; sequence FRDLWNILDFVVVVGALVAFALA. At 1193–1206 the chain is on the extracellular side; that stretch reads NALGTNKGRDIKTI. Residues 1207–1224 form a helical membrane-spanning segment; sequence KSLRVLRVLRPLKTIKRL. Residues 1225–1243 are Cytoplasmic-facing; the sequence is PKLKAVFDCVVTSLKNVFN. A helical membrane pass occupies residues 1244–1263; it reads ILIVYKLFMFIFAVIAVQLF. Over 1264–1350 the chain is Extracellular; the sequence is KGKFFYCTDS…RGPSRSNRME (87 aa). Residues 1351–1374 form a helical membrane-spanning segment; sequence MSIFYVVYFVVFPFFFVNIFVALI. Residues 1375-1431 are Cytoplasmic-facing; that stretch reads IITFQEQGDKMMEECSLEKNERACIDFAISAKPLTRYMPQNRHTFQYRVWHFVVSPS. An IV repeat occupies 1415-1678; it reads NRHTFQYRVW…LFVAVIMDNF (264 aa). The chain crosses the membrane as a helical span at residues 1432–1450; the sequence is FEYTIMAMIALNTVVLMMK. Residues 1451–1467 are Extracellular-facing; the sequence is YYSAPWTYELALKYLNI. A helical membrane pass occupies residues 1468 to 1485; that stretch reads AFTMVFSLECVLKVIAFG. The Cytoplasmic portion of the chain corresponds to 1486–1493; the sequence is FLNYFRDT. A helical membrane pass occupies residues 1494 to 1512; sequence WNIFDFITVIGSITEIILT. The Extracellular segment spans residues 1513–1523; that stretch reads DSKLVNTSGFN. N-linked (GlcNAc...) asparagine glycosylation is found at asparagine 1518 and asparagine 1523. A helical transmembrane segment spans residues 1524 to 1542; sequence MSFLKLFRAARLIKLLRQG. Over 1543–1561 the chain is Cytoplasmic; that stretch reads YTIRILLWTFVQSFKALPY. Residues 1562–1581 traverse the membrane as a helical segment; it reads VCLLIAMLFFIYAIIGMQVF. The Extracellular portion of the chain corresponds to 1582-1650; sequence GNIKLDEESH…NESERCGTDL (69 aa). N-linked (GlcNAc...) asparagine glycosylation is present at asparagine 1641. A helical transmembrane segment spans residues 1651–1676; sequence AYVYFVSFIFFCSFLMLNLFVAVIMD. Residues 1677 to 2222 are Cytoplasmic-facing; the sequence is NFEYLTRDSS…LSDTEEDDKC (546 aa). An EF-hand domain is found at 1691-1726; it reads HHLDEFVRVWAEYDRAACGRIHYTEMYEMLTLMSPP. Residues aspartate 1704, arginine 1710, and glutamate 1715 each contribute to the Ca(2+) site. A disordered region spans residues 1970-2135; sequence SAHRLNSDSG…QQGQHPSPQH (166 aa). Basic and acidic residues predominate over residues 1974–1994; it reads LNSDSGHKSDTHRSGGRERGR. Residues serine 2003 and serine 2022 each carry the phosphoserine modification. A compositionally biased stretch (basic and acidic residues) spans 2010-2027; the sequence is NSEERGTQADWESPERRQ. Over residues 2046–2061 the composition is skewed to low complexity; it reads SLSESSIPSISDTSTP. Over residues 2104–2123 the composition is skewed to polar residues; it reads LASQALESNSACLTESSNSL. Low complexity predominate over residues 2124–2135; sequence HPQQGQHPSPQH.

Belongs to the calcium channel alpha-1 subunit (TC 1.A.1.11) family. CACNA1E subfamily. As to quaternary structure, interacts with EFHC1. Voltage-dependent calcium channels are multisubunit complexes, consisting of alpha-1, alpha-2, beta and delta subunits in a 1:1:1:1 ratio. The channel activity is directed by the pore-forming and voltage-sensitive alpha-1 subunit. In many cases, this subunit is sufficient to generate voltage-sensitive calcium channel activity. The auxiliary subunits beta and alpha-2/delta linked by a disulfide bridge regulate the channel activity. Expressed in central nervous system and in insulinoma.

The protein localises to the membrane. It catalyses the reaction Ca(2+)(in) = Ca(2+)(out). Functionally, voltage-sensitive calcium channels (VSCC) mediate the entry of calcium ions into excitable cells and are also involved in a variety of calcium-dependent processes, including muscle contraction, hormone or neurotransmitter release, gene expression, cell motility, cell division and cell death. The isoform alpha-1E gives rise to R-type calcium currents. R-type calcium channels belong to the 'high-voltage activated' (HVA) group and are blocked by nickel. They are however insensitive to dihydropyridines (DHP). Calcium channels containing alpha-1E subunit could be involved in the modulation of firing patterns of neurons which is important for information processing. The chain is Voltage-dependent R-type calcium channel subunit alpha-1E (Cacna1e) from Rattus norvegicus (Rat).